We begin with the raw amino-acid sequence, 386 residues long: Branched-chain-amino-acid aminotransferase, cytosolic (386 aa).

Met-1 carries the N-acetylmethionine modification. N6-(pyridoxal phosphate)lysine is present on Lys-222.

The protein belongs to the class-IV pyridoxal-phosphate-dependent aminotransferase family. In terms of assembly, homodimer. Requires pyridoxal 5'-phosphate as cofactor. As to expression, expressed in brain and kidney. Overexpressed in MYC-induced brain tumors, lymphomas, as well as in a teratocarcinoma cell line.

The protein localises to the cytoplasm. The enzyme catalyses L-leucine + 2-oxoglutarate = 4-methyl-2-oxopentanoate + L-glutamate. It carries out the reaction L-isoleucine + 2-oxoglutarate = (S)-3-methyl-2-oxopentanoate + L-glutamate. The catalysed reaction is L-valine + 2-oxoglutarate = 3-methyl-2-oxobutanoate + L-glutamate. In terms of biological role, catalyzes the first reaction in the catabolism of the essential branched chain amino acids leucine, isoleucine, and valine. This chain is Branched-chain-amino-acid aminotransferase, cytosolic (Bcat1), found in Mus musculus (Mouse).